A 622-amino-acid polypeptide reads, in one-letter code: 3-(3-hydroxy-phenyl)propionate/3-hydroxycinnamic acid hydroxylase (622 aa).

FAD contacts are provided by residues 20-49 and 288-298; these read DVAIIGAGPVGLMIANYLGLQGVRVVVLEK and FRVDRVLLAGD.

The protein belongs to the PheA/TfdB FAD monooxygenase family. FAD is required as a cofactor.

The catalysed reaction is 3-(3-hydroxyphenyl)propanoate + NADH + O2 + H(+) = 3-(2,3-dihydroxyphenyl)propanoate + NAD(+) + H2O. It catalyses the reaction (2E)-3-(3-hydroxyphenyl)prop-2-enoate + NADH + O2 + H(+) = (2E)-3-(2,3-dihydroxyphenyl)prop-2-enoate + NAD(+) + H2O. It functions in the pathway aromatic compound metabolism; 3-phenylpropanoate degradation. Its function is as follows. Catalyzes the insertion of one atom of molecular oxygen into position 2 of the phenyl ring of 3-(3-hydroxyphenyl)propionate (3-HPP) and hydroxycinnamic acid (3HCI). The protein is 3-(3-hydroxy-phenyl)propionate/3-hydroxycinnamic acid hydroxylase of Paraburkholderia xenovorans (strain LB400).